The following is a 381-amino-acid chain: Cobalt-precorrin-5B C(1)-methyltransferase (381 aa).

The protein belongs to the CbiD family.

It catalyses the reaction Co-precorrin-5B + S-adenosyl-L-methionine = Co-precorrin-6A + S-adenosyl-L-homocysteine. The protein operates within cofactor biosynthesis; adenosylcobalamin biosynthesis; cob(II)yrinate a,c-diamide from sirohydrochlorin (anaerobic route): step 6/10. Its function is as follows. Catalyzes the methylation of C-1 in cobalt-precorrin-5B to form cobalt-precorrin-6A. The chain is Cobalt-precorrin-5B C(1)-methyltransferase from Clostridium botulinum (strain Eklund 17B / Type B).